Reading from the N-terminus, the 372-residue chain is MHNEAPIQRRKSKRIYVGNVPIGDGAPIAVQSMTNTRTTDVEATVNQIKALERVGADIVRVSVPTMDAAEAFRLIKQQVSVPLVADIHFDYRIALKVAEYGVDCLRINPGNIGNEERIRTVVDCARDKNIPIRIGVNAGSLEKDLQEKYGEPTPQALLESAMRHVDHLDRLNFDQFKVSVKASDVFLAVESYRLLAKQIDQPLHLGITEAGGARAGAVKSAIGLGLLLSEGIGDTLRVSLAADPVEEIKVGFDILKSLRIRSRGINFIACPTCSRQEFDVIGTVNALEQRLEDIITPMDVSIIGCVVNGPGEALVSTLGVTGGNKKSGFYEEGVRKDRLDNDDMITQLEARIRAKASMLDESRRISVQQLEK.

Residues Cys270, Cys273, Cys305, and Glu312 each coordinate [4Fe-4S] cluster.

The protein belongs to the IspG family. It depends on [4Fe-4S] cluster as a cofactor.

It catalyses the reaction (2E)-4-hydroxy-3-methylbut-2-enyl diphosphate + oxidized [flavodoxin] + H2O + 2 H(+) = 2-C-methyl-D-erythritol 2,4-cyclic diphosphate + reduced [flavodoxin]. It functions in the pathway isoprenoid biosynthesis; isopentenyl diphosphate biosynthesis via DXP pathway; isopentenyl diphosphate from 1-deoxy-D-xylulose 5-phosphate: step 5/6. Converts 2C-methyl-D-erythritol 2,4-cyclodiphosphate (ME-2,4cPP) into 1-hydroxy-2-methyl-2-(E)-butenyl 4-diphosphate. This chain is 4-hydroxy-3-methylbut-2-en-1-yl diphosphate synthase (flavodoxin), found in Cronobacter sakazakii (strain ATCC BAA-894) (Enterobacter sakazakii).